The following is a 389-amino-acid chain: MIRNGHGEAGGAKRPGPRARRAVRVWCDGCYDMVHYGHSNQLRQARAMGDHLIVGVHTDEEIAKHKGPPVFTQEERYKMVQAIKWVDEVVPAAPYVTTLETLDKYNCDFCVHGNDITLTVDGRDTYEEVKQAGRYRECKRTQGVSTTDLVGRMLLVTKAHHSSQEMSSEYREYADSFGKCPGGRNPWTGVSQFLQTSQKIIQFASGKEPQPGETVIYVAGAFDLFHIGHVDFLEKVYGLAERPYVIAGLHFDQEVNHYKGKNYPIMNLHERTLSVLACRYVSEVVIGAPYSVTAELLDHFKVDLVCHGKTEVVPDKDGSDPYEEPKRRGIFCQVDSGNDLTTDLIVQRIIKNRLEYEARNQKKEAKELAFQEAMRRQEAQPEREIDCDF.

Residues 221–222 (AF), 229–232 (HVDF), Lys-259, 307–310 (HGKT), and 336–340 (SGNDL) each bind CTP. 2 positions are modified to phosphothreonine: Thr-341 and Thr-342.

Belongs to the cytidylyltransferase family.

The catalysed reaction is phosphoethanolamine + CTP + H(+) = CDP-ethanolamine + diphosphate. The protein operates within phospholipid metabolism; phosphatidylethanolamine biosynthesis; phosphatidylethanolamine from ethanolamine: step 2/3. Ethanolamine-phosphate cytidylyltransferase that catalyzes the second step in the synthesis of phosphatidylethanolamine (PE) from ethanolamine via the CDP-ethanolamine pathway. Phosphatidylethanolamine is a dominant inner-leaflet phospholipid in cell membranes, where it plays a role in membrane function by structurally stabilizing membrane-anchored proteins, and participates in important cellular processes such as cell division, cell fusion, blood coagulation, and apoptosis. This is Ethanolamine-phosphate cytidylyltransferase (PCYT2) from Bos taurus (Bovine).